We begin with the raw amino-acid sequence, 369 residues long: MRERIATAKRVVVKIGSSSLTSDEGGHTVDPNRINTIVNALQARMEAGSDVIVVSSGSVAAGMAPLGLTTRPTDLSMKQAAAAVGQVHLMHQWGRSFARYGRPVGQVLLTAGDAGQRDRARNAQRTIDRLRMLGVIPIVNENDTVATTGVNFGDNDRLAAIVSHLVSADALVLLSDVDGLFDKNPADPTARFISEVRDGNDLKGVLAGDGGKVGTGGMASKVSAARLASRSGVPVLLTSAANIGPALEHAQVGTVFHPKENRLSAWKFWALYAADTAGKIRLDQGATEAVTSGGKSLLAVGITEVIGDFRAGEIVEILGPNGEIIGRGEVNYDSETLMPMLGMKTQELPDDMQRPVVHADYLSNYASRA.

Lys14 is an ATP binding site. Residues Ser56, Asp143, and Asn155 each contribute to the substrate site. ATP-binding positions include Ser175–Asp176 and Thr215–Lys221. One can recognise a PUA domain in the interval Ala277–Asp351.

Belongs to the glutamate 5-kinase family.

It is found in the cytoplasm. It carries out the reaction L-glutamate + ATP = L-glutamyl 5-phosphate + ADP. It functions in the pathway amino-acid biosynthesis; L-proline biosynthesis; L-glutamate 5-semialdehyde from L-glutamate: step 1/2. Functionally, catalyzes the transfer of a phosphate group to glutamate to form L-glutamate 5-phosphate. This is Glutamate 5-kinase from Corynebacterium efficiens (strain DSM 44549 / YS-314 / AJ 12310 / JCM 11189 / NBRC 100395).